Here is a 255-residue protein sequence, read N- to C-terminus: Ditrans,polycis-undecaprenyl-diphosphate synthase ((2E,6E)-farnesyl-diphosphate specific) (255 aa).

Asp21 is a catalytic residue. Asp21 contacts Mg(2+). Residues 22-25, Trp26, Arg34, His38, and 66-68 each bind substrate; these read GNGR and SSE. The Proton acceptor role is filled by Asn69. Substrate-binding positions include Trp70, Arg72, Arg189, and 195 to 197; that span reads RIS. Residue Glu208 coordinates Mg(2+).

This sequence belongs to the UPP synthase family. As to quaternary structure, homodimer. The cofactor is Mg(2+).

It catalyses the reaction 8 isopentenyl diphosphate + (2E,6E)-farnesyl diphosphate = di-trans,octa-cis-undecaprenyl diphosphate + 8 diphosphate. Catalyzes the sequential condensation of isopentenyl diphosphate (IPP) with (2E,6E)-farnesyl diphosphate (E,E-FPP) to yield (2Z,6Z,10Z,14Z,18Z,22Z,26Z,30Z,34E,38E)-undecaprenyl diphosphate (di-trans,octa-cis-UPP). UPP is the precursor of glycosyl carrier lipid in the biosynthesis of bacterial cell wall polysaccharide components such as peptidoglycan and lipopolysaccharide. The chain is Ditrans,polycis-undecaprenyl-diphosphate synthase ((2E,6E)-farnesyl-diphosphate specific) from Xylella fastidiosa (strain 9a5c).